The following is a 207-amino-acid chain: N-(5'-phosphoribosyl)anthranilate isomerase (207 aa).

This sequence belongs to the TrpF family.

It carries out the reaction N-(5-phospho-beta-D-ribosyl)anthranilate = 1-(2-carboxyphenylamino)-1-deoxy-D-ribulose 5-phosphate. It participates in amino-acid biosynthesis; L-tryptophan biosynthesis; L-tryptophan from chorismate: step 3/5. This is N-(5'-phosphoribosyl)anthranilate isomerase from Legionella pneumophila subsp. pneumophila (strain Philadelphia 1 / ATCC 33152 / DSM 7513).